A 116-amino-acid chain; its full sequence is Iron-sulfur cluster insertion protein ErpA (116 aa).

Iron-sulfur cluster-binding residues include C44, C108, and C110.

It belongs to the HesB/IscA family. Homodimer. Iron-sulfur cluster is required as a cofactor.

Required for insertion of 4Fe-4S clusters for at least IspG. In Pseudomonas aeruginosa (strain LESB58), this protein is Iron-sulfur cluster insertion protein ErpA.